The sequence spans 312 residues: Gamma-soluble NSF attachment protein (312 aa).

The segment at 281-312 (KKKAAAPPQAKPEGTAAPAAEEEEDEYAGGLC) is disordered. Over residues 285–299 (AAPPQAKPEGTAAPA) the composition is skewed to low complexity. Residues 300–312 (AEEEEDEYAGGLC) are compositionally biased toward acidic residues.

This sequence belongs to the SNAP family. In terms of assembly, interacts with RAB11FIP5. Interacts with VTI1A.

Its subcellular location is the membrane. It is found in the golgi apparatus. In terms of biological role, required for vesicular transport between the endoplasmic reticulum and the Golgi apparatus. This chain is Gamma-soluble NSF attachment protein, found in Bos taurus (Bovine).